Consider the following 185-residue polypeptide: Protein GrpE (185 aa).

The span at 1-20 (MSQEKKEELQSEAQVTKEET) shows a compositional bias: basic and acidic residues. A disordered region spans residues 1–28 (MSQEKKEELQSEAQVTKEETPQANEAAA).

This sequence belongs to the GrpE family. In terms of assembly, homodimer.

It localises to the cytoplasm. Its function is as follows. Participates actively in the response to hyperosmotic and heat shock by preventing the aggregation of stress-denatured proteins, in association with DnaK and GrpE. It is the nucleotide exchange factor for DnaK and may function as a thermosensor. Unfolded proteins bind initially to DnaJ; upon interaction with the DnaJ-bound protein, DnaK hydrolyzes its bound ATP, resulting in the formation of a stable complex. GrpE releases ADP from DnaK; ATP binding to DnaK triggers the release of the substrate protein, thus completing the reaction cycle. Several rounds of ATP-dependent interactions between DnaJ, DnaK and GrpE are required for fully efficient folding. This is Protein GrpE from Sulfurimonas denitrificans (strain ATCC 33889 / DSM 1251) (Thiomicrospira denitrificans (strain ATCC 33889 / DSM 1251)).